Reading from the N-terminus, the 396-residue chain is S-adenosylmethionine synthase (396 aa).

H16 is an ATP binding site. Residue D18 coordinates Mg(2+). E44 serves as a coordination point for K(+). 2 residues coordinate L-methionine: E57 and Q100. Positions 100–110 (QSVDIAQGVDR) are flexible loop. Residues 165 to 167 (DAK), D240, 246 to 247 (RK), A263, and K267 each bind ATP. Residue D240 participates in L-methionine binding. K271 is an L-methionine binding site.

This sequence belongs to the AdoMet synthase family. In terms of assembly, homotetramer; dimer of dimers. The cofactor is Mg(2+). Requires K(+) as cofactor.

It localises to the cytoplasm. The catalysed reaction is L-methionine + ATP + H2O = S-adenosyl-L-methionine + phosphate + diphosphate. It participates in amino-acid biosynthesis; S-adenosyl-L-methionine biosynthesis; S-adenosyl-L-methionine from L-methionine: step 1/1. Catalyzes the formation of S-adenosylmethionine (AdoMet) from methionine and ATP. The overall synthetic reaction is composed of two sequential steps, AdoMet formation and the subsequent tripolyphosphate hydrolysis which occurs prior to release of AdoMet from the enzyme. This is S-adenosylmethionine synthase from Stutzerimonas stutzeri (strain A1501) (Pseudomonas stutzeri).